Reading from the N-terminus, the 305-residue chain is MIKQRTLKTSVSTVGVGLHKGEKVQVTLRPAPANTGIVFRRVDLDPVVDIKASPEAVGETTLCTCLVNEQQVKVSTVEHLLSAVAGLGIDNLIIDVDSAEIPIMDGSALPFVYLIQSVGIETLNAPKRFLRIKKPIRVEEGDKWAELLPYEGFRVNFSIEFEHPVIEKTCQTMSMDFSSCSFIKEISRARTFGFMKDIEFLRSHNLALGGSLENAIVLDNYRMLNKNELRYDDEFVKHKILDAIGDLYMGSASILGELNAFKSGHGLNNLLLREVFKRTDSWEWVTYEGDKTSPIEYQEVNATAF.

The Zn(2+) site is built by His-79, His-238, and Asp-242. The active-site Proton donor is His-265.

This sequence belongs to the LpxC family. Zn(2+) serves as cofactor.

It carries out the reaction a UDP-3-O-[(3R)-3-hydroxyacyl]-N-acetyl-alpha-D-glucosamine + H2O = a UDP-3-O-[(3R)-3-hydroxyacyl]-alpha-D-glucosamine + acetate. Its pathway is glycolipid biosynthesis; lipid IV(A) biosynthesis; lipid IV(A) from (3R)-3-hydroxytetradecanoyl-[acyl-carrier-protein] and UDP-N-acetyl-alpha-D-glucosamine: step 2/6. Catalyzes the hydrolysis of UDP-3-O-myristoyl-N-acetylglucosamine to form UDP-3-O-myristoylglucosamine and acetate, the committed step in lipid A biosynthesis. This is UDP-3-O-acyl-N-acetylglucosamine deacetylase from Colwellia psychrerythraea (strain 34H / ATCC BAA-681) (Vibrio psychroerythus).